A 78-amino-acid polypeptide reads, in one-letter code: Large ribosomal subunit protein bL28 (78 aa).

Residues 1 to 21 (MSRVCQVTGKKPMVGNNRSHA) form a disordered region.

The protein belongs to the bacterial ribosomal protein bL28 family.

This chain is Large ribosomal subunit protein bL28, found in Shewanella woodyi (strain ATCC 51908 / MS32).